The primary structure comprises 223 residues: Histone H1.5 (223 aa).

Low complexity predominate over residues 1–14; the sequence is MSETAPAETAAPAP. The tract at residues 1–56 is disordered; that stretch reads MSETAPAETAAPAPVEKSPAKKKTTKKAGAAKRKATGPPVSELITKAVSASKERGG. S2 carries the N-acetylserine modification. S2 is modified (phosphoserine). K17 is modified (N6-acetyllysine). Phosphoserine is present on S18. Residues 20–35 show a composition bias toward basic residues; the sequence is AKKKTTKKAGAAKRKA. K27 bears the N6-methyllysine mark. Residue K34 is modified to N6-(beta-hydroxybutyryl)lysine; alternate. At K34 the chain carries N6-succinyllysine; alternate. T36 bears the Phosphothreonine mark. In terms of domain architecture, H15 spans 36-109; sequence TGPPVSELIT…GASGSFKLNK (74 aa). K46 bears the N6-acetyllysine mark. At K52 the chain carries N6-(beta-hydroxybutyryl)lysine. Position 54 is a citrulline (R54). Position 64 is an N6-(beta-hydroxybutyryl)lysine (K64). K75 is modified (N6-acetyllysine). N6-(beta-hydroxybutyryl)lysine is present on residues K85, K90, and K106. The segment at 91-223 is disordered; sequence GTLVQTKGTG…KAKKAVSKKK (133 aa). Positions 119–130 are enriched in basic residues; that stretch reads KAKKTGAAKAKK. Phosphothreonine occurs at positions 135 and 152. The segment covering 137 to 158 has biased composition (basic residues); the sequence is KKPKKTAGAKKTVKKTPKKAKK. N6-acetyllysine is present on K165. Over residues 166-184 the composition is skewed to basic residues; sequence KVAKSPKKAKAAAKPKKAA. Residues S170 and S186 each carry the phosphoserine modification. Positions 191-223 are enriched in basic residues; that stretch reads KAVKSKASKPKVTKPKTAKPKAAKAKKAVSKKK.

The protein belongs to the histone H1/H5 family. As to quaternary structure, interacts with MSX1. Post-translationally, H1 histones are progressively phosphorylated during the cell cycle, becoming maximally phosphorylated during late G2 phase and M phase, and being dephosphorylated sharply thereafter. In terms of processing, citrullination at Arg-54 (H1R54ci) by PADI4 takes place within the DNA-binding site of H1 and results in its displacement from chromatin and global chromatin decondensation, thereby promoting pluripotency and stem cell maintenance. Hydroxybutyrylation of histones is induced by starvation.

The protein resides in the nucleus. It localises to the chromosome. In terms of biological role, histone H1 protein binds to linker DNA between nucleosomes forming the macromolecular structure known as the chromatin fiber. Histones H1 are necessary for the condensation of nucleosome chains into higher-order structured fibers. Also acts as a regulator of individual gene transcription through chromatin remodeling, nucleosome spacing and DNA methylation. This Mus musculus (Mouse) protein is Histone H1.5 (H1-5).